The chain runs to 601 residues: ATP-dependent lipid A-core flippase (601 aa).

The ABC transmembrane type-1 domain occupies leucine 28–arginine 328. 6 helical membrane passes run cysteine 32–isoleucine 52, valine 81–phenylalanine 101, alanine 160–tyrosine 180, tryptophan 183–valine 203, alanine 267–alanine 287, and aspartate 296–isoleucine 316. An ABC transporter domain is found at leucine 360–methionine 597. Residue glycine 394–serine 401 participates in ATP binding.

Belongs to the ABC transporter superfamily. Lipid exporter (TC 3.A.1.106) family. As to quaternary structure, homodimer.

It is found in the cell inner membrane. The enzyme catalyses ATP + H2O + lipid A-core oligosaccharideSide 1 = ADP + phosphate + lipid A-core oligosaccharideSide 2.. Its function is as follows. Involved in lipopolysaccharide (LPS) biosynthesis. Translocates lipid A-core from the inner to the outer leaflet of the inner membrane. Transmembrane domains (TMD) form a pore in the inner membrane and the ATP-binding domain (NBD) is responsible for energy generation. The protein is ATP-dependent lipid A-core flippase of Shewanella sp. (strain MR-4).